Reading from the N-terminus, the 549-residue chain is Glucose-6-phosphate isomerase (549 aa).

Residue glutamate 355 is the Proton donor of the active site. Catalysis depends on residues histidine 386 and lysine 514.

The protein belongs to the GPI family.

The protein localises to the cytoplasm. It carries out the reaction alpha-D-glucose 6-phosphate = beta-D-fructose 6-phosphate. The protein operates within carbohydrate biosynthesis; gluconeogenesis. It functions in the pathway carbohydrate degradation; glycolysis; D-glyceraldehyde 3-phosphate and glycerone phosphate from D-glucose: step 2/4. Its function is as follows. Catalyzes the reversible isomerization of glucose-6-phosphate to fructose-6-phosphate. The chain is Glucose-6-phosphate isomerase from Salmonella agona (strain SL483).